A 400-amino-acid chain; its full sequence is MLELTTQDIQLQQHFANKQAAIQGLAHALTAKGLVAEGYAQGMLNREAQHSTYLGNGIAIPHGTTDTRELVKQTGVTAMHFPQGLDWGDGNLVYVAIGIAAKSDEHLGILKQLTRVLSADGVEQALQQAKTAQQIIAIIKGEAQLTADFDASLIQLQFPASDMVQMSAVAGGLLKNTGCAENEFVADLVTKAPTHLGRGLWLVASDRAVKRTGMSIVTTANHCEYEQQAVKALIAFSVCNDVHQPLLNTITQCVFEQKQDQLLQADVQQLLNLFSGNAEQTIAQRTIAVGTITEETIAAETVAEPDSARAHTATFRIKNSHGLHARPGAMLVAEAKKFESNIRVSNLDGDGQVVNAKSLMKVIALGVKHNHQLQFTAEGPDAEAALQALGVAINAGLGEG.

The PTS EIIA type-2 domain occupies 2 to 142; sequence LELTTQDIQL…QQIIAIIKGE (141 aa). Histidine 62 serves as the catalytic Tele-phosphohistidine intermediate; for EIIA activity. Position 62 is a phosphohistidine; by HPr (histidine 62). In terms of domain architecture, HPr spans 310 to 400; the sequence is AHTATFRIKN…VAINAGLGEG (91 aa). Histidine 324 serves as the catalytic Pros-phosphohistidine intermediate; for HPr activity. Phosphohistidine; by EI is present on histidine 324.

The protein localises to the cytoplasm. Its function is as follows. The phosphoenolpyruvate-dependent sugar phosphotransferase system (sugar PTS), a major carbohydrate active transport system, catalyzes the phosphorylation of incoming sugar substrates concomitantly with their translocation across the cell membrane. The enzyme II FruAB PTS system is involved in fructose transport. This chain is Multiphosphoryl transfer protein, found in Vibrio cholerae serotype O1 (strain ATCC 39315 / El Tor Inaba N16961).